Here is a 337-residue protein sequence, read N- to C-terminus: Phosphate acyltransferase (337 aa).

Belongs to the PlsX family. In terms of assembly, homodimer. Probably interacts with PlsY.

It is found in the cytoplasm. It carries out the reaction a fatty acyl-[ACP] + phosphate = an acyl phosphate + holo-[ACP]. Its pathway is lipid metabolism; phospholipid metabolism. In terms of biological role, catalyzes the reversible formation of acyl-phosphate (acyl-PO(4)) from acyl-[acyl-carrier-protein] (acyl-ACP). This enzyme utilizes acyl-ACP as fatty acyl donor, but not acyl-CoA. The chain is Phosphate acyltransferase from Moritella marina (Vibrio marinus).